The following is a 426-amino-acid chain: Cytochrome c biogenesis protein CcsB (426 aa).

Transmembrane regions (helical) follow at residues 14–34 (LKIAILLLLVIAVSCAAGTLI), 72–92 (SFWFLFLLIWLGLALSVCSFR), and 162–182 (LGPILIHLGMILLMIGATYGS).

The protein belongs to the Ccs1/CcsB family. May interact with CcsA.

It is found in the cellular thylakoid membrane. Its function is as follows. Required during biogenesis of c-type cytochromes (cytochrome c6 and cytochrome f) at the step of heme attachment. The protein is Cytochrome c biogenesis protein CcsB of Prochlorococcus marinus (strain NATL2A).